The chain runs to 429 residues: Adenylosuccinate synthetase (429 aa).

Residues 12 to 18 (GDEGKGK) and 40 to 42 (GHT) each bind GTP. Asp-13 functions as the Proton acceptor in the catalytic mechanism. 2 residues coordinate Mg(2+): Asp-13 and Gly-40. IMP is bound by residues 13–16 (DEGK), 38–41 (NAGH), Thr-128, Arg-142, Gln-223, Thr-238, and Arg-302. Catalysis depends on His-41, which acts as the Proton donor. Residue 298–304 (TTTGRPR) coordinates substrate. GTP is bound by residues Arg-304, 330–332 (SID), and 412–414 (SVG).

Belongs to the adenylosuccinate synthetase family. Homodimer. It depends on Mg(2+) as a cofactor.

Its subcellular location is the cytoplasm. The enzyme catalyses IMP + L-aspartate + GTP = N(6)-(1,2-dicarboxyethyl)-AMP + GDP + phosphate + 2 H(+). It functions in the pathway purine metabolism; AMP biosynthesis via de novo pathway; AMP from IMP: step 1/2. In terms of biological role, plays an important role in the de novo pathway of purine nucleotide biosynthesis. Catalyzes the first committed step in the biosynthesis of AMP from IMP. The polypeptide is Adenylosuccinate synthetase (Lysinibacillus sphaericus (strain C3-41)).